Here is a 340-residue protein sequence, read N- to C-terminus: Aurora kinase A- and ninein-interacting protein (340 aa).

Residues 175-340 (QREAKRKGEG…DSEGNRVIRH (166 aa)) are interaction with AURKA. A compositionally biased stretch (basic and acidic residues) spans 178 to 190 (AKRKGEGLRESKT). The disordered stretch occupies residues 178 to 209 (AKRKGEGLRESKTDCPGMGSHIRPPGSKCHQP). Positions 266 to 340 (RDSWSQLFTE…DSEGNRVIRH (75 aa)) are interaction with RBBP8/CtIP. At Ser-277 the chain carries Phosphoserine. A disordered region spans residues 293-317 (DVTNARNQGSGQFPDSPQAQGQDGP). The span at 296 to 313 (NARNQGSGQFPDSPQAQG) shows a compositional bias: polar residues.

This sequence belongs to the AUNIP family. Interacts (via C-terminus) with AURKA (via C-terminus). Interacts (via N-terminus) with NIN; this interaction blocks NIN phosphorylation by both AURKA and GSK3B. Identified in a complex with NIN and AURKA. Interacts with RBBP8/CtIP.

Its subcellular location is the nucleus. It localises to the chromosome. It is found in the cytoplasm. The protein localises to the cytoskeleton. The protein resides in the microtubule organizing center. Its subcellular location is the centrosome. It localises to the spindle pole. DNA-binding protein that accumulates at DNA double-strand breaks (DSBs) following DNA damage and promotes DNA resection and homologous recombination. Serves as a sensor of DNA damage: binds DNA with a strong preference for DNA substrates that mimic structures generated at stalled replication forks, and anchors RBBP8/CtIP to DSB sites to promote DNA end resection and ensuing homologous recombination repair. Inhibits non-homologous end joining (NHEJ). Required for the dynamic movement of AURKA at the centrosomes and spindle apparatus during the cell cycle. The polypeptide is Aurora kinase A- and ninein-interacting protein (Mus musculus (Mouse)).